The chain runs to 258 residues: RBPJ-interacting and tubulin-associated protein 1 (258 aa).

3 disordered regions span residues F28–K86, T132–S182, and A195–K258. A compositionally biased stretch (polar residues) spans S71–L81. The short motif at L81–S97 is the Nuclear localization signal element. The interval R117 to P145 is interaction with RBPJ/RBPSUH. Positions P145–K258 are interaction with tubulin. 2 stretches are compositionally biased toward polar residues: residues H201–P212 and G236–Q245.

This sequence belongs to the RITA family. As to quaternary structure, interacts with RBPJ/RBPSUH.

Its subcellular location is the cytoplasm. It localises to the nucleus. The protein localises to the cytoskeleton. The protein resides in the microtubule organizing center. It is found in the centrosome. Functionally, tubulin-binding protein that acts as a negative regulator of Notch signaling pathway. Shuttles between the cytoplasm and the nucleus and mediates the nuclear export of RBPJ/RBPSUH, thereby preventing the interaction between RBPJ/RBPSUH and NICD product of Notch proteins (Notch intracellular domain), leading to down-regulate Notch-mediated transcription. May play a role in neurogenesis. The polypeptide is RBPJ-interacting and tubulin-associated protein 1 (Rita1) (Rattus norvegicus (Rat)).